The following is a 711-amino-acid chain: Arginine decarboxylase 2 (711 aa).

Position 147 is an N6-(pyridoxal phosphate)lysine (Lys-147). Residue 331–341 (IDIGGGLGIDY) coordinates substrate. The segment at 642–661 (MHTKGGSEGENEEEEEDDEF) is disordered. Positions 650–661 (GENEEEEEDDEF) are enriched in acidic residues.

The protein belongs to the Orn/Lys/Arg decarboxylase class-II family. SpeA subfamily. As to quaternary structure, homodimer and heterodimer with ADC1. Pyridoxal 5'-phosphate is required as a cofactor. Mg(2+) serves as cofactor.

It localises to the plastid. The protein localises to the chloroplast. Its subcellular location is the cytoplasm. It is found in the cytosol. The enzyme catalyses L-arginine + H(+) = agmatine + CO2. It participates in amine and polyamine biosynthesis; agmatine biosynthesis; agmatine from L-arginine: step 1/1. In terms of biological role, required for the biosynthesis of putrescine. Catalyzes the first step of polyamine (PA) biosynthesis to produce putrescine from arginine. Is a major contributor to basal arginine decarboxylase (ADC) activity and putrescine biosynthesis. Accumulation of putrescine plays a positive role in salt stress tolerance. Accumulation of putrescine plays a positive role in freezing tolerance. Production of PA is essential for normal seed development. Controls PA homeostasis which is crucial for normal plant growth and development. The chain is Arginine decarboxylase 2 from Arabidopsis thaliana (Mouse-ear cress).